The primary structure comprises 126 residues: Methylglyoxal synthase (126 aa).

The region spanning 1 to 126 is the MGS-like domain; that stretch reads MAERQKIALI…ADRLLPVITE (126 aa). Residues H12, K16, 38–41, and 59–60 contribute to the substrate site; these read TGTT and SG. Residue D65 is the Proton donor/acceptor of the active site. A substrate-binding site is contributed by H92.

It belongs to the methylglyoxal synthase family.

The enzyme catalyses dihydroxyacetone phosphate = methylglyoxal + phosphate. Its function is as follows. Catalyzes the formation of methylglyoxal from dihydroxyacetone phosphate. This is Methylglyoxal synthase from Allorhizobium ampelinum (strain ATCC BAA-846 / DSM 112012 / S4) (Agrobacterium vitis (strain S4)).